A 202-amino-acid polypeptide reads, in one-letter code: Glycerol-3-phosphate acyltransferase (202 aa).

Transmembrane regions (helical) follow at residues 6 to 26 (LTLGMILSAYLAGSISSAVLV), 56 to 76 (SAALVLFFDMLKGALPAYIAF), 82 to 102 (SVSLGIIAIAACLGHIFPIFF), 118 to 138 (APIGPELALLLMGSWVLMVLI), and 141 to 161 (YSSLAAIVTALLAPFYTWYLD).

The protein belongs to the PlsY family. In terms of assembly, probably interacts with PlsX.

The protein localises to the cell inner membrane. It catalyses the reaction an acyl phosphate + sn-glycerol 3-phosphate = a 1-acyl-sn-glycero-3-phosphate + phosphate. It participates in lipid metabolism; phospholipid metabolism. In terms of biological role, catalyzes the transfer of an acyl group from acyl-phosphate (acyl-PO(4)) to glycerol-3-phosphate (G3P) to form lysophosphatidic acid (LPA). This enzyme utilizes acyl-phosphate as fatty acyl donor, but not acyl-CoA or acyl-ACP. In Shewanella woodyi (strain ATCC 51908 / MS32), this protein is Glycerol-3-phosphate acyltransferase.